We begin with the raw amino-acid sequence, 375 residues long: Growth/differentiation factor 8 (375 aa).

An N-terminal signal peptide occupies residues 1–23 (MQKLQLCVYIYLFMLIVAGPVDL). Residues 24 to 266 (NENSEQKENV…VTDTPKRSRR (243 aa)) constitute a propeptide that is removed on maturation. Asn71 carries an N-linked (GlcNAc...) asparagine glycan. Intrachain disulfides connect Cys272/Cys282, Cys281/Cys340, Cys309/Cys372, and Cys313/Cys374.

It belongs to the TGF-beta family. In terms of assembly, homodimer; disulfide-linked. Interacts with WFIKKN2, leading to inhibit its activity. Interacts with FSTL3. In terms of processing, synthesized as large precursor molecule that undergoes proteolytic cleavage to generate an N-terminal propeptide and a disulfide linked C-terminal dimer, which is the biologically active molecule. The circulating form consists of a latent complex of the C-terminal dimer and other proteins, including its propeptide, which maintain the C-terminal dimer in a latent, inactive state. Ligand activation requires additional cleavage of the prodomain by a tolloid-like metalloproteinase.

It localises to the secreted. Its function is as follows. Acts specifically as a negative regulator of skeletal muscle growth. This Papio hamadryas (Hamadryas baboon) protein is Growth/differentiation factor 8 (MSTN).